The following is a 398-amino-acid chain: Carboxyaminopropylagmatine dehydrogenase (398 aa).

This sequence belongs to the saccharopine dehydrogenase family.

The catalysed reaction is N(1)-[(S)-3-amino-3-carboxypropyl]agmatine + NADP(+) + H2O = L-aspartate 4-semialdehyde + agmatine + NADPH + H(+). Its pathway is amine and polyamine biosynthesis; spermidine biosynthesis. Functionally, dehydrogenase involved in the biosynthesis of spermidine via the carboxyaminopropylagmatine (CAPA) pathway. Catalyzes the reductive condensation of agmatine and L-aspartate-beta-semialdehyde (ASA) into CAPA. Shows activity toward putrescine and 1,3-diaminopropane, but the catalytic efficiency is three to four orders of magnitude lower than that for agmatine. Cannot use cadaverine or spermidine. The chain is Carboxyaminopropylagmatine dehydrogenase from Synechocystis sp. (strain ATCC 27184 / PCC 6803 / Kazusa).